Reading from the N-terminus, the 184-residue chain is Putative NAD(P)H nitroreductase HI_1542 (184 aa).

Residues 10–12 (RKS), Arg35, and His39 each bind FMN. Residue 122-127 (AAQAQG) coordinates NAD(+). Residue 132 to 134 (WIS) coordinates FMN.

The protein belongs to the nitroreductase family. In terms of assembly, homodimer. FMN is required as a cofactor.

The polypeptide is Putative NAD(P)H nitroreductase HI_1542 (Haemophilus influenzae (strain ATCC 51907 / DSM 11121 / KW20 / Rd)).